A 474-amino-acid chain; its full sequence is Probable glycine dehydrogenase (decarboxylating) subunit 2 (474 aa).

Lysine 266 bears the N6-(pyridoxal phosphate)lysine mark.

Belongs to the GcvP family. C-terminal subunit subfamily. As to quaternary structure, the glycine cleavage system is composed of four proteins: P, T, L and H. In this organism, the P 'protein' is a heterodimer of two subunits. Pyridoxal 5'-phosphate serves as cofactor.

It carries out the reaction N(6)-[(R)-lipoyl]-L-lysyl-[glycine-cleavage complex H protein] + glycine + H(+) = N(6)-[(R)-S(8)-aminomethyldihydrolipoyl]-L-lysyl-[glycine-cleavage complex H protein] + CO2. Its function is as follows. The glycine cleavage system catalyzes the degradation of glycine. The P protein binds the alpha-amino group of glycine through its pyridoxal phosphate cofactor; CO(2) is released and the remaining methylamine moiety is then transferred to the lipoamide cofactor of the H protein. The protein is Probable glycine dehydrogenase (decarboxylating) subunit 2 of Thermus thermophilus (strain ATCC 27634 / DSM 579 / HB8).